Consider the following 305-residue polypeptide: N-acetylneuraminate lyase A (305 aa).

2 residues coordinate aceneuramate: threonine 51 and threonine 52. The Proton donor role is filled by tyrosine 143. The active-site Schiff-base intermediate with substrate is the lysine 173. The aceneuramate site is built by serine 175, glycine 197, aspartate 199, glutamate 200, and serine 216.

The protein belongs to the DapA family. NanA subfamily. As to quaternary structure, homotetramer.

The protein localises to the cytoplasm. It carries out the reaction aceneuramate = aldehydo-N-acetyl-D-mannosamine + pyruvate. Its pathway is amino-sugar metabolism; N-acetylneuraminate degradation. In terms of biological role, catalyzes the cleavage of N-acetylneuraminic acid (sialic acid) to form pyruvate and N-acetylmannosamine via a Schiff base intermediate. It prevents sialic acids from being recycled and returning to the cell surface. Involved in the N-glycolylneuraminic acid (Neu5Gc) degradation pathway. In Xenopus laevis (African clawed frog), this protein is N-acetylneuraminate lyase A (npl-a).